A 120-amino-acid chain; its full sequence is Glycine cleavage system H protein (120 aa).

A Lipoyl-binding domain is found at 17–99; that stretch reads VATVGITEHA…QGAAWFFKLK (83 aa). Residue K58 is modified to N6-lipoyllysine.

The protein belongs to the GcvH family. The glycine cleavage system is composed of four proteins: P, T, L and H. Requires (R)-lipoate as cofactor.

Its function is as follows. The glycine cleavage system catalyzes the degradation of glycine. The H protein shuttles the methylamine group of glycine from the P protein to the T protein. This Sinorhizobium fredii (strain NBRC 101917 / NGR234) protein is Glycine cleavage system H protein.